Here is a 354-residue protein sequence, read N- to C-terminus: UDP-N-acetylglucosamine--N-acetylmuramyl-(pentapeptide) pyrophosphoryl-undecaprenol N-acetylglucosamine transferase (354 aa).

Residues 11–13, Arg-164, Ser-194, and Gln-289 contribute to the UDP-N-acetyl-alpha-D-glucosamine site; that span reads TAG.

This sequence belongs to the glycosyltransferase 28 family. MurG subfamily.

It is found in the cell membrane. The catalysed reaction is di-trans,octa-cis-undecaprenyl diphospho-N-acetyl-alpha-D-muramoyl-L-alanyl-D-glutamyl-meso-2,6-diaminopimeloyl-D-alanyl-D-alanine + UDP-N-acetyl-alpha-D-glucosamine = di-trans,octa-cis-undecaprenyl diphospho-[N-acetyl-alpha-D-glucosaminyl-(1-&gt;4)]-N-acetyl-alpha-D-muramoyl-L-alanyl-D-glutamyl-meso-2,6-diaminopimeloyl-D-alanyl-D-alanine + UDP + H(+). Its pathway is cell wall biogenesis; peptidoglycan biosynthesis. Its function is as follows. Cell wall formation. Catalyzes the transfer of a GlcNAc subunit on undecaprenyl-pyrophosphoryl-MurNAc-pentapeptide (lipid intermediate I) to form undecaprenyl-pyrophosphoryl-MurNAc-(pentapeptide)GlcNAc (lipid intermediate II). This Clostridium botulinum (strain Kyoto / Type A2) protein is UDP-N-acetylglucosamine--N-acetylmuramyl-(pentapeptide) pyrophosphoryl-undecaprenol N-acetylglucosamine transferase.